Reading from the N-terminus, the 204-residue chain is Small heat shock protein, chloroplastic (204 aa).

The interval 34 to 55 (QMGRVDHDHELDDRSNRAPISR) is disordered. Residues 37–49 (RVDHDHELDDRSN) show a composition bias toward basic and acidic residues. Residues 98 to 204 (GSGRAMRRGW…KKDVFQVMVD (107 aa)) enclose the sHSP domain.

It belongs to the small heat shock protein (HSP20) family.

Its subcellular location is the plastid. It localises to the chloroplast stroma. The sequence is that of Small heat shock protein, chloroplastic (HSP23) from Oxybasis rubra (Red goosefoot).